The chain runs to 351 residues: Protein MSS2, mitochondrial (351 aa).

TPR repeat units lie at residues 155-188 (HLTV…ENST) and 260-294 (KECF…MDLE).

In terms of assembly, interacts with COX18.

Its subcellular location is the mitochondrion inner membrane. Required to stabilize mitochondrial cytochrome C oxidase subunit 2 (COX2) and to translocate the C-terminal domain of COX2 through the inner membrane. The chain is Protein MSS2, mitochondrial (MSS2) from Saccharomyces cerevisiae (strain ATCC 204508 / S288c) (Baker's yeast).